The chain runs to 96 residues: Co-chaperonin GroES (96 aa).

Belongs to the GroES chaperonin family. As to quaternary structure, heptamer of 7 subunits arranged in a ring. Interacts with the chaperonin GroEL.

The protein resides in the cytoplasm. Functionally, together with the chaperonin GroEL, plays an essential role in assisting protein folding. The GroEL-GroES system forms a nano-cage that allows encapsulation of the non-native substrate proteins and provides a physical environment optimized to promote and accelerate protein folding. GroES binds to the apical surface of the GroEL ring, thereby capping the opening of the GroEL channel. This is Co-chaperonin GroES from Shewanella baltica (strain OS223).